Reading from the N-terminus, the 125-residue chain is Small ribosomal subunit protein eS6 (125 aa).

Belongs to the eukaryotic ribosomal protein eS6 family.

This is Small ribosomal subunit protein eS6 from Pyrococcus abyssi (strain GE5 / Orsay).